We begin with the raw amino-acid sequence, 387 residues long: Leucine aminopeptidase 1 (387 aa).

A signal peptide spans 1 to 18 (MKFTNLSLLALSASLASA). Positions 19 to 86 (RFVEQHETDQ…LGTLRTSSVK (68 aa)) are excised as a propeptide. An N-linked (GlcNAc...) asparagine glycan is attached at asparagine 179. Zn(2+) contacts are provided by histidine 187, aspartate 206, glutamate 245, and aspartate 272. The cysteines at positions 321 and 325 are disulfide-linked. Residue histidine 354 coordinates Zn(2+).

This sequence belongs to the peptidase M28 family. M28E subfamily. As to quaternary structure, monomer. The cofactor is Zn(2+).

It is found in the secreted. Functionally, extracellular aminopeptidase that allows assimilation of proteinaceous substrates. This is Leucine aminopeptidase 1 (lap1) from Sclerotinia sclerotiorum (strain ATCC 18683 / 1980 / Ss-1) (White mold).